A 591-amino-acid polypeptide reads, in one-letter code: uncharacterized protein (591 aa).

A compositionally biased stretch (gly residues) spans 1–10 (MSIRGVGGNG). 4 disordered regions span residues 1–37 (MSIRGVGGNGNSRIPSHNGDGSNRRSQNTKGNNKVED), 110–135 (RSSATRAAESGSSSRTARGASSGYRE), 324–344 (EESGWTRESASRMEGDEAQGP), and 487–517 (GHYQDPRASDYDLPRASDYDLPRSPYPTPPL). A compositionally biased stretch (polar residues) spans 11–32 (NSRIPSHNGDGSNRRSQNTKGN). The span at 110–132 (RSSATRAAESGSSSRTARGASSG) shows a compositional bias: low complexity. Residues 490–507 (QDPRASDYDLPRASDYDL) are compositionally biased toward basic and acidic residues.

The protein to C.muridarum TC_0268.

This is an uncharacterized protein from Chlamydia trachomatis serovar D (strain ATCC VR-885 / DSM 19411 / UW-3/Cx).